Here is a 359-residue protein sequence, read N- to C-terminus: Fructose-bisphosphate aldolase class 2 (359 aa).

A D-glyceraldehyde 3-phosphate-binding site is contributed by serine 62. The Proton donor role is filled by aspartate 110. Residues histidine 111, aspartate 145, glutamate 175, and histidine 227 each coordinate Zn(2+). Glycine 228 contributes to the dihydroxyacetone phosphate binding site. Histidine 265 contributes to the Zn(2+) binding site. Dihydroxyacetone phosphate is bound by residues 266 to 268 and 287 to 290; these read GGS and NIDT.

The protein belongs to the class II fructose-bisphosphate aldolase family. Requires Zn(2+) as cofactor.

It carries out the reaction beta-D-fructose 1,6-bisphosphate = D-glyceraldehyde 3-phosphate + dihydroxyacetone phosphate. It functions in the pathway carbohydrate degradation; glycolysis; D-glyceraldehyde 3-phosphate and glycerone phosphate from D-glucose: step 4/4. Its function is as follows. Catalyzes the aldol condensation of dihydroxyacetone phosphate (DHAP or glycerone-phosphate) with glyceraldehyde 3-phosphate (G3P) to form fructose 1,6-bisphosphate (FBP) in gluconeogenesis and the reverse reaction in glycolysis. In Buchnera aphidicola subsp. Baizongia pistaciae (strain Bp), this protein is Fructose-bisphosphate aldolase class 2 (fbaA).